The sequence spans 491 residues: Serine/threonine-protein phosphatase 2A regulatory subunit B'' subunit delta (491 aa).

Positions 331–366 (TTPTSTEYWFRCMDLDGDGALSMFELEFFYEEQAQR) constitute an EF-hand domain. 4 residues coordinate Ca(2+): Asp344, Asp346, Asp348, and Glu355. 2 stretches are compositionally biased toward acidic residues: residues 460–473 (AMAE…EGSD) and 481–491 (ADEDCDDLEPL). The disordered stretch occupies residues 460–491 (AMAEDDDDHDEGSDPIDLYGLADEDCDDLEPL).

PP2A consists of a common heterodimeric core enzyme, composed of a 36 kDa catalytic subunit (subunit C) and a 65 kDa constant regulatory subunit (PR65 or subunit A), that associates with a variety of regulatory subunits. Proteins that associate with the core dimer include three families of regulatory subunits B (the R2/B/PR55/B55, R3/B''/PR72/PR130/PR59 and R5/B'/B56 families), the 48 kDa variable regulatory subunit, viral proteins, and cell signaling molecules. As to expression, expressed in testis, kidney, liver, lung, spleen, brain and heart.

The B regulatory subunit might modulate substrate selectivity and catalytic activity, and might also direct the localization of the catalytic enzyme to a particular subcellular compartment. Interacts with retinoblastoma-related protein p107 (in vivo). May target PP2A core dimer to p107 resulting in dephosphorylation of p107. This Mus musculus (Mouse) protein is Serine/threonine-protein phosphatase 2A regulatory subunit B'' subunit delta (Ppp2r3d).